Here is a 312-residue protein sequence, read N- to C-terminus: Small ribosomal subunit protein uS2m (312 aa).

It belongs to the universal ribosomal protein uS2 family.

It localises to the mitochondrion. In Acanthamoeba castellanii (Amoeba), this protein is Small ribosomal subunit protein uS2m (RPS2).